The following is a 384-amino-acid chain: MNAVHFGAGNIGRGFIGEILAKNGFHITFVDVNETIIQALKERKSYTIELADASHQQINVENVTGLNNMTEPEKVVEAIAEADLVTTAIGPNILPRIAELIAQGIDARAEANCQKPLDIIACENMIGGSTFLAEEVAKYLKNPAYAEQWIGFPDAAVDRIVPLQKHEDPLFVQVEPFCEWVIDDTNRKAKEIQLEGVHYVADLEPYIERKLFSVNTGHATVAYTGALLGYQTIDEAMQDALVVAQLKSVLQETGKLLVAKWNFDEQEHAAYIEKIIQRFQNKYISDAITRVARTPIRKLGAQERFIRPIRELQERNLVSPHLLAMIGIVFNYHDPEDEQSRQLQEMLDQESVDTVIAEVTGIEDPETVKNIKQNVERYARPQVA.

Ala-3–Gly-14 is an NAD(+) binding site.

This sequence belongs to the mannitol dehydrogenase family. Monomer.

The enzyme catalyses D-mannitol 1-phosphate + NAD(+) = beta-D-fructose 6-phosphate + NADH + H(+). This Enterococcus faecalis (strain ATCC 700802 / V583) protein is Mannitol-1-phosphate 5-dehydrogenase (mtlD).